A 190-amino-acid chain; its full sequence is MKRLISCLTIICALNASAAAETTSNPCSRWISFLKPVCQRFHQTWTEGHDDMYFSGYAWHNRYVYSNEKIKSYNETAWGGGLGKSLFDEKGNWHGLYAIAFLDSHRHLEPAVGYAYLKTASVNKDLKAGLGYSVLVTSRVDYDNVPIPGALPWAALFYKRITIAATYIPGSSREGHENGNVLYMLGKISL.

An N-terminal signal peptide occupies residues 1-18 (MKRLISCLTIICALNASA). Residues H60, D103, and S104 contribute to the active site.

It belongs to the lipid A palmitoyltransferase family. Homodimer.

It localises to the cell outer membrane. The catalysed reaction is a lipid A + a 1,2-diacyl-sn-glycero-3-phosphocholine = a hepta-acyl lipid A + a 2-acyl-sn-glycero-3-phosphocholine. The enzyme catalyses a lipid IVA + a 1,2-diacyl-sn-glycero-3-phosphocholine = a lipid IVB + a 2-acyl-sn-glycero-3-phosphocholine. It catalyses the reaction a lipid IIA + a 1,2-diacyl-sn-glycero-3-phosphocholine = a lipid IIB + a 2-acyl-sn-glycero-3-phosphocholine. Transfers a fatty acid residue from the sn-1 position of a phospholipid to the N-linked hydroxyfatty acid chain on the proximal unit of lipid A or its precursors. This chain is Lipid A acyltransferase PagP, found in Legionella pneumophila (strain Paris).